A 141-amino-acid chain; its full sequence is Nucleoside diphosphate kinase (141 aa).

Residues lysine 11, phenylalanine 59, arginine 87, threonine 93, arginine 104, and asparagine 114 each coordinate ATP.

This sequence belongs to the NDK family. In terms of assembly, homotetramer. It depends on Mg(2+) as a cofactor.

Its subcellular location is the cytoplasm. It catalyses the reaction a 2'-deoxyribonucleoside 5'-diphosphate + ATP = a 2'-deoxyribonucleoside 5'-triphosphate + ADP. It carries out the reaction a ribonucleoside 5'-diphosphate + ATP = a ribonucleoside 5'-triphosphate + ADP. Functionally, major role in the synthesis of nucleoside triphosphates other than ATP. The ATP gamma phosphate is transferred to the NDP beta phosphate via a ping-pong mechanism, using a phosphorylated active-site intermediate. This is Nucleoside diphosphate kinase from Saccharophagus degradans (strain 2-40 / ATCC 43961 / DSM 17024).